Here is a 160-residue protein sequence, read N- to C-terminus: MPSFDIISEVEAVELRNAVDNANRELSTRFDFRGVEASFDYKDESVKLTAQDDFQLKQMRDILRSNLTKRNVDPNAMEAKAADQTGRTWHQTVIFKQGIETDVAKKIVKLIKDNKVKVQASIQGDKVRVTGKKRDDLQAVMALVRSGELGQPFQFDNFRD.

It belongs to the YajQ family.

In terms of biological role, nucleotide-binding protein. This Vibrio atlanticus (strain LGP32) (Vibrio splendidus (strain Mel32)) protein is Nucleotide-binding protein VS_1405.